We begin with the raw amino-acid sequence, 378 residues long: Chorismate synthase (378 aa).

An NADP(+)-binding site is contributed by Arg49. Residues Arg126 to Ser128, Gly287, Lys302 to Thr306, and Arg328 each bind FMN.

Belongs to the chorismate synthase family. As to quaternary structure, homotetramer. The cofactor is FMNH2.

The enzyme catalyses 5-O-(1-carboxyvinyl)-3-phosphoshikimate = chorismate + phosphate. The protein operates within metabolic intermediate biosynthesis; chorismate biosynthesis; chorismate from D-erythrose 4-phosphate and phosphoenolpyruvate: step 7/7. In terms of biological role, catalyzes the anti-1,4-elimination of the C-3 phosphate and the C-6 proR hydrogen from 5-enolpyruvylshikimate-3-phosphate (EPSP) to yield chorismate, which is the branch point compound that serves as the starting substrate for the three terminal pathways of aromatic amino acid biosynthesis. This reaction introduces a second double bond into the aromatic ring system. The chain is Chorismate synthase from Synechococcus sp. (strain JA-3-3Ab) (Cyanobacteria bacterium Yellowstone A-Prime).